We begin with the raw amino-acid sequence, 611 residues long: Dolabella-3,7-dien-18-ol synthase TPS06 (611 aa).

Mg(2+) contacts are provided by Asp-363, Asp-367, Asp-507, Thr-511, and Glu-515. Residues 363 to 367 (DNTFD) carry the DDXXD motif; degenerate motif.

The protein belongs to the terpene synthase family. Tpsa subfamily. The cofactor is Mg(2+). Mn(2+) serves as cofactor. Predominantly expressed in flowers but also in stems, siliques, roots and leaves.

It is found in the cytoplasm. It catalyses the reaction (2E,6E,10E)-geranylgeranyl diphosphate + H2O = (3E,7E)-dolabella-3,7-dien-18-ol + diphosphate. The protein operates within secondary metabolite biosynthesis; terpenoid biosynthesis. Involved in terpene biosynthesis in roots. Possesses sesquiterpene (C15) synthase activity and diterpene (C20) synthase activity in vitro. Possesses dolabella-3,7-dien-18-ol synthase activity in vitro. Catalyzes the formation of dolabella-3,7-dien-18-ol from geranylgeranyl diphosphate. The polypeptide is Dolabella-3,7-dien-18-ol synthase TPS06 (Arabidopsis thaliana (Mouse-ear cress)).